The chain runs to 508 residues: Fc receptor-like protein 2 (508 aa).

Residues 1–19 (MLLWSLLVIFDAVTEQADS) form the signal peptide. Ig-like C2-type domains lie at 20–98 (LTLV…SNIV), 109–187 (PVLT…HRIR), 201–290 (PISN…KVVN), and 300–387 (PVLT…VSIS). The Extracellular segment spans residues 20-401 (LTLVAPSSVF…YRRDLMTAGV (382 aa)). Cysteines 128 and 177 form a disulfide. 5 N-linked (GlcNAc...) asparagine glycosylation sites follow: Asn-204, Asn-234, Asn-343, Asn-355, and Asn-365. 2 disulfide bridges follow: Cys-226–Cys-275 and Cys-321–Cys-368. A helical transmembrane segment spans residues 402–422 (LWGLFGVLGFTGVALLLYALF). The Cytoplasmic segment spans residues 423-508 (HKISGESSAT…QVIYSSVKKS (86 aa)). Residues 429 to 453 (SSATNEPRGASRPNPQEFTYSSPTP) are disordered. Over residues 441–452 (PNPQEFTYSSPT) the composition is skewed to polar residues. Short sequence motifs (ITIM motif) lie at residues 446–451 (FTYSSP), 460–465 (PVYVNV), 472–477 (VVYSQV), and 500–505 (VIYSSV).

In terms of assembly, the tyrosine-phosphorylated isoform 2 interacts with PTPN6. Isoform 2 is N- and O-glycosylated, and phosphorylated. As to expression, expressed in the secondary lymphoid organs, spleen and lymph node. Expression is limited to the mature B-cell lines. Highly expressed in CD19 and within the mantle zones of the tonsil tissue. Isoform 2 is expressed in the spleen, peripheral blood and bone marrow. Isoform 2 and isoform 4 are expressed in B-cell lines. Preferentially expressed in memory B-cells (at protein level).

The protein localises to the cell membrane. Functionally, may have an regulatory role in normal and neoplastic B cell development. The chain is Fc receptor-like protein 2 (FCRL2) from Homo sapiens (Human).